The sequence spans 299 residues: UPF0276 protein ABO_1518 (299 aa).

It belongs to the UPF0276 family.

The sequence is that of UPF0276 protein ABO_1518 from Alcanivorax borkumensis (strain ATCC 700651 / DSM 11573 / NCIMB 13689 / SK2).